A 193-amino-acid polypeptide reads, in one-letter code: Outer-membrane lipoprotein LolB (193 aa).

A signal peptide spans Met-1 to Ala-21. Residue Cys-22 is the site of N-palmitoyl cysteine attachment. Cys-22 carries S-diacylglycerol cysteine lipidation.

This sequence belongs to the LolB family. As to quaternary structure, monomer.

Its subcellular location is the cell outer membrane. Its function is as follows. Plays a critical role in the incorporation of lipoproteins in the outer membrane after they are released by the LolA protein. The protein is Outer-membrane lipoprotein LolB of Azoarcus sp. (strain BH72).